The chain runs to 90 residues: Small ribosomal subunit protein bS18 (90 aa).

The interval methionine 1–lysine 24 is disordered.

The protein belongs to the bacterial ribosomal protein bS18 family. In terms of assembly, part of the 30S ribosomal subunit. Forms a tight heterodimer with protein bS6.

In terms of biological role, binds as a heterodimer with protein bS6 to the central domain of the 16S rRNA, where it helps stabilize the platform of the 30S subunit. The sequence is that of Small ribosomal subunit protein bS18 from Chlorobium phaeovibrioides (strain DSM 265 / 1930) (Prosthecochloris vibrioformis (strain DSM 265)).